A 249-amino-acid chain; its full sequence is 5'-nucleotidase SurE (249 aa).

Positions 8, 9, 39, and 91 each coordinate a divalent metal cation.

Belongs to the SurE nucleotidase family. A divalent metal cation is required as a cofactor.

It localises to the cytoplasm. The catalysed reaction is a ribonucleoside 5'-phosphate + H2O = a ribonucleoside + phosphate. In terms of biological role, nucleotidase that shows phosphatase activity on nucleoside 5'-monophosphates. The sequence is that of 5'-nucleotidase SurE from Pseudomonas putida (strain ATCC 700007 / DSM 6899 / JCM 31910 / BCRC 17059 / LMG 24140 / F1).